Consider the following 536-residue polypeptide: MASAEETFFSAARSRRLACDRCHRHKLRCERSSVIVNGGVAVPLGPCKRCLKACIPCQTVQTISGAFTAAKTGDTPVPRRSAREADQAASPAKRAPSPARRPTASTPRNVPGLIHDDTLSGTDTAPFEISVADAAMLDVSNFDFSGSEFIDLGSNGVLSSPTPIQSPPDHGSLIRDSEIRDRTPIPPHNQPPPRYDDFANDLSCFGTMAPKDDTISTLPALTDVEKASTGSSKSAPERGPREECSQRLLEIHGLLLNELQCITPADVTDALMFPENGSFSGRTRTGQGPGNTVVHRVLFTSERLIELLSIIRAADTAINGDKREAGIGPRNTSSFVDLPIVISILTCYVGLLSVYHAIFSHIYEALRVYEPLRAAKIRQRAWTRRGSVPGPKPGPGLVQPRAIYGADEAGGRPALNVLGIRIQLEIMTHMLEQIDSALFGPRVAHGADGDEGRTDTINRGGEVMFGHPATKALLATMLSHEGYDSGVPVGPFADGDGDDDDDDGYMEGMRGCRMGFRTLMGLQKNIRRLLRTNSFG.

The segment at residues 19–57 (CDRCHRHKLRCERSSVIVNGGVAVPLGPCKRCLKACIPC) is a DNA-binding region (zn(2)-C6 fungal-type). Disordered regions lie at residues 70 to 122 (AKTG…LSGT) and 220 to 243 (ALTD…PREE). Residues 88 to 108 (AASPAKRAPSPARRPTASTPR) show a composition bias toward low complexity.

The protein resides in the nucleus. Its function is as follows. Transcription factor; part of the gene cluster that mediates the biosynthesis of chaetoglobosin A which has a unique inhibitory activity against actin polymerization in mammalian cells. Chaetoglobosin A and its intermediates are involved in the morphological differentiation of C.globosum. Binds directly to asymmetric direct repeats present in the promoters of the chaetoglobosin A cluster genes. This Chaetomium globosum (strain ATCC 6205 / CBS 148.51 / DSM 1962 / NBRC 6347 / NRRL 1970) (Soil fungus) protein is Transcription factor cheR.